The chain runs to 460 residues: MATGKIVQVIGAVVDVEFPQDAVPRVYDALEVQNGNERLVLEVQQQLGGGIVRTIAMGSSDGLRRGLDVKDLEHPIEVPVGKATLGRIMNVLGEPVDMKGEIGEEERWAIHRAAPSYEELSNSQELLETGIKVIDLMCPFAKGGKVGLFGGAGVGKTVNMMELIRNIAIEHSGYSVFAGVGERTREGNDFYHEMTDSNVIDKVSLVYGQMNEPPGNRLRVALTGLTMAEKFRDEGRDVLLFVDNIYRYTLAGTEVSALLGRMPSAVGYQPTLAEEMGVLQERITSTKTGSITSVQAVYVPADDLTDPSPATTFAHLDATVVLSRQIASLGIYPAVDPLDSTSRQLDPLVVGQEHYDTARGVQSILQRYQELKDIIAILGMDELSEEDKLVVARARKIQRFLSQPFFVAEVFTGSPGKYVSLKDTIRGFKGIMEGEYDHLPEQAFYMVGSIEEAVEKAKKL.

Gly150–Thr157 contributes to the ATP binding site.

This sequence belongs to the ATPase alpha/beta chains family. F-type ATPases have 2 components, CF(1) - the catalytic core - and CF(0) - the membrane proton channel. CF(1) has five subunits: alpha(3), beta(3), gamma(1), delta(1), epsilon(1). CF(0) has three main subunits: a(1), b(2) and c(9-12). The alpha and beta chains form an alternating ring which encloses part of the gamma chain. CF(1) is attached to CF(0) by a central stalk formed by the gamma and epsilon chains, while a peripheral stalk is formed by the delta and b chains.

Its subcellular location is the cell inner membrane. It catalyses the reaction ATP + H2O + 4 H(+)(in) = ADP + phosphate + 5 H(+)(out). Produces ATP from ADP in the presence of a proton gradient across the membrane. The catalytic sites are hosted primarily by the beta subunits. The polypeptide is ATP synthase subunit beta (Escherichia coli (strain SMS-3-5 / SECEC)).